Reading from the N-terminus, the 478-residue chain is ATP synthase subunit beta (478 aa).

An ATP-binding site is contributed by 163 to 170 (GGAGVGKT).

Belongs to the ATPase alpha/beta chains family. In terms of assembly, F-type ATPases have 2 components, CF(1) - the catalytic core - and CF(0) - the membrane proton channel. CF(1) has five subunits: alpha(3), beta(3), gamma(1), delta(1), epsilon(1). CF(0) has three main subunits: a(1), b(2) and c(9-12). The alpha and beta chains form an alternating ring which encloses part of the gamma chain. CF(1) is attached to CF(0) by a central stalk formed by the gamma and epsilon chains, while a peripheral stalk is formed by the delta and b chains.

The protein localises to the cell inner membrane. The catalysed reaction is ATP + H2O + 4 H(+)(in) = ADP + phosphate + 5 H(+)(out). Produces ATP from ADP in the presence of a proton gradient across the membrane. The catalytic sites are hosted primarily by the beta subunits. The protein is ATP synthase subunit beta of Aquifex pyrophilus.